We begin with the raw amino-acid sequence, 328 residues long: MKQPVRVAVTGAAGQIGYSLLFRIASGEMLGKDQPVILQLLEVPVEKAQQALKGVMMELDDCAFPLLAGMIGTDDPKVAFKDADYALLVGSRPRGPGMERADLLKVNGEIFIGQGQALNEVASRDVKVLVVGNPANTNAYIAMKSAPDLPAKNFTAMLRLDHNRALTQVAQKAGVVVADIEKLTVWGNHSPTMYADYRFATANGESLKDKINDPAWNKDVFLPTVGKRGAAIIEARGLSSAASAANAAIDHMRDWALGTNGKWVTMGVPSDGSYGIPEGVMFGFPVTTENGEYKIVQGLEIDEFSRERINFTLNELEEERAAIADMVK.

11–17 (GAAGQIG) is an NAD(+) binding site. 2 residues coordinate substrate: Arg94 and Arg100. Residues Asn107, Gln114, and 131–133 (VGN) each bind NAD(+). Asn133 and Arg164 together coordinate substrate. His189 acts as the Proton acceptor in catalysis.

It belongs to the LDH/MDH superfamily. MDH type 2 family.

It carries out the reaction (S)-malate + NAD(+) = oxaloacetate + NADH + H(+). Functionally, catalyzes the reversible oxidation of malate to oxaloacetate. This chain is Malate dehydrogenase, found in Acinetobacter baumannii (strain SDF).